The primary structure comprises 632 residues: Arginine--tRNA ligase (632 aa).

A 'HIGH' region motif is present at residues 120–130 (ANPIHPLHIGH).

The protein belongs to the class-I aminoacyl-tRNA synthetase family.

The protein resides in the cytoplasm. It catalyses the reaction tRNA(Arg) + L-arginine + ATP = L-arginyl-tRNA(Arg) + AMP + diphosphate. The polypeptide is Arginine--tRNA ligase (Pyrobaculum islandicum (strain DSM 4184 / JCM 9189 / GEO3)).